The primary structure comprises 399 residues: Methylthioribose kinase (399 aa).

Residues Asn40, Lys57, and 111 to 113 (EDL) each bind ATP. Asp229 serves as a coordination point for substrate. Position 246–248 (246–248 (DAE)) interacts with ATP. A substrate-binding site is contributed by Arg344.

Belongs to the methylthioribose kinase family. Homodimer.

It catalyses the reaction 5-(methylsulfanyl)-D-ribose + ATP = 5-(methylsulfanyl)-alpha-D-ribose 1-phosphate + ADP + H(+). It functions in the pathway amino-acid biosynthesis; L-methionine biosynthesis via salvage pathway; S-methyl-5-thio-alpha-D-ribose 1-phosphate from S-methyl-5'-thioadenosine (hydrolase route): step 2/2. In terms of biological role, catalyzes the phosphorylation of methylthioribose into methylthioribose-1-phosphate. This Klebsiella pneumoniae subsp. pneumoniae (strain ATCC 700721 / MGH 78578) protein is Methylthioribose kinase.